The following is a 385-amino-acid chain: Acetate kinase (385 aa).

Asn-8 serves as a coordination point for Mg(2+). Lys-15 lines the ATP pocket. Position 85 (Arg-85) interacts with substrate. The Proton donor/acceptor role is filled by Asp-142. ATP is bound by residues 200–204 (HLGNG), 275–277 (DMR), and 323–327 (GIGEN). Glu-373 contacts Mg(2+).

The protein belongs to the acetokinase family. In terms of assembly, homodimer. Requires Mg(2+) as cofactor. Mn(2+) serves as cofactor.

It is found in the cytoplasm. The catalysed reaction is acetate + ATP = acetyl phosphate + ADP. It participates in metabolic intermediate biosynthesis; acetyl-CoA biosynthesis; acetyl-CoA from acetate: step 1/2. Catalyzes the formation of acetyl phosphate from acetate and ATP. Can also catalyze the reverse reaction. In Francisella tularensis subsp. holarctica (strain OSU18), this protein is Acetate kinase.